A 379-amino-acid polypeptide reads, in one-letter code: MTESANRALLPAGLRDMLPPDAEFEASVVHSLMSMFARHGYDRVKPPLIEFEESLLDGAGGGTSSQTFRVMDPMSQKMMGLRADMTPQVARIAATRLGSQPRPLRLSYAGQVLRVKGTQLRPERQFGQAGIELIGSDDAGADAEVLVMTAEALDDLGVPGVSADLALPTLVPAVFAAYGINGETADRLRAALDHKDSATVAAQGGAAAPLLQALIAAAGPAARALAELCALDLPPAAAAERDRLARVVELAGADLPSLTLTVDPVENRGFEYHTGLSFTLFARNMGAELGRGGRYQGGGGEPATGATLFMDSVLAALPGPKPAKRLFVPAGTPRAWAQAFRAQGWVTVSGLDPAADPQVEAKHQGCRHRLGPDGIVEVE.

Belongs to the class-II aminoacyl-tRNA synthetase family. HisZ subfamily. Heteromultimer composed of HisG and HisZ subunits.

It localises to the cytoplasm. The protein operates within amino-acid biosynthesis; L-histidine biosynthesis; L-histidine from 5-phospho-alpha-D-ribose 1-diphosphate: step 1/9. Its function is as follows. Required for the first step of histidine biosynthesis. May allow the feedback regulation of ATP phosphoribosyltransferase activity by histidine. The protein is ATP phosphoribosyltransferase regulatory subunit of Paramagnetospirillum magneticum (strain ATCC 700264 / AMB-1) (Magnetospirillum magneticum).